A 344-amino-acid chain; its full sequence is Peroxidase 36 (344 aa).

The first 28 residues, M1–C28, serve as a signal peptide directing secretion. 4 disulfides stabilise this stretch: C50/C130, C83/C88, C136/C337, and C215/C247. The active-site Proton acceptor is the H81. Ca(2+) is bound by residues D82, V85, G87, D89, and S91. P178 contributes to the substrate binding site. H208 is a heme b binding site. T209 serves as a coordination point for Ca(2+). N224 carries an N-linked (GlcNAc...) asparagine glycan. Ca(2+) contacts are provided by D260, T263, and D268.

It belongs to the peroxidase family. Classical plant (class III) peroxidase subfamily. Heme b is required as a cofactor. Ca(2+) serves as cofactor.

The protein localises to the secreted. It catalyses the reaction 2 a phenolic donor + H2O2 = 2 a phenolic radical donor + 2 H2O. Removal of H(2)O(2), oxidation of toxic reductants, biosynthesis and degradation of lignin, suberization, auxin catabolism, response to environmental stresses such as wounding, pathogen attack and oxidative stress. These functions might be dependent on each isozyme/isoform in each plant tissue. This Arabidopsis thaliana (Mouse-ear cress) protein is Peroxidase 36 (PER36).